The primary structure comprises 60 residues: Metallothionein A (60 aa).

The beta stretch occupies residues 1-28 (MDPCQCSKSGTCNCGGSCTCTNCSCKSC). Cys4, Cys6, Cys12, Cys14, Cys18, Cys20, Cys23, Cys25, Cys28, Cys32, Cys33, Cys35, Cys36, Cys40, Cys43, Cys47, Cys49, Cys54, Cys58, and Cys59 together coordinate a divalent metal cation. Positions 29-60 (KKSCCPCCPSGCTKCASGCVCKGKTCDTSCCQ) are alpha.

It belongs to the metallothionein superfamily. Type 1 family.

Functionally, metallothioneins have a high content of cysteine residues that bind various heavy metals. This is Metallothionein A (mta) from Trematomus bernacchii (Emerald rockcod).